A 902-amino-acid polypeptide reads, in one-letter code: Protein translocase subunit SecA (902 aa).

Residues Gln89, 107–111 (GEGKT), and Asp502 contribute to the ATP site. 4 residues coordinate Zn(2+): Cys884, Cys886, Cys895, and His896.

Belongs to the SecA family. In terms of assembly, monomer and homodimer. Part of the essential Sec protein translocation apparatus which comprises SecA, SecYEG and auxiliary proteins SecDF-YajC and YidC. Zn(2+) is required as a cofactor.

The protein localises to the cell inner membrane. Its subcellular location is the cytoplasm. It catalyses the reaction ATP + H2O + cellular proteinSide 1 = ADP + phosphate + cellular proteinSide 2.. Part of the Sec protein translocase complex. Interacts with the SecYEG preprotein conducting channel. Has a central role in coupling the hydrolysis of ATP to the transfer of proteins into and across the cell membrane, serving both as a receptor for the preprotein-SecB complex and as an ATP-driven molecular motor driving the stepwise translocation of polypeptide chains across the membrane. The polypeptide is Protein translocase subunit SecA (Agrobacterium fabrum (strain C58 / ATCC 33970) (Agrobacterium tumefaciens (strain C58))).